The following is a 579-amino-acid chain: CTP synthase (579 aa).

An amidoligase domain region spans residues 1–281; it reads MPALRKHPQT…DAYVVRRLNL (281 aa). S23 lines the CTP pocket. UTP is bound at residue S23. Residues 24 to 29 and D81 contribute to the ATP site; that span reads SLGKGL. D81 and E155 together coordinate Mg(2+). Residues 162-164, 202-207, and K238 each bind CTP; these read DIE and KTKPTQ. UTP-binding positions include 202–207 and K238; that span reads KTKPTQ. The Glutamine amidotransferase type-1 domain maps to 306–554; that stretch reads RIALVGKYID…IGAALDYKAA (249 aa). G369 contributes to the L-glutamine binding site. C396 serves as the catalytic Nucleophile; for glutamine hydrolysis. L-glutamine-binding positions include 397-400, E419, and R480; that span reads LGLQ. Active-site residues include H527 and E529.

This sequence belongs to the CTP synthase family. In terms of assembly, homotetramer.

The enzyme catalyses UTP + L-glutamine + ATP + H2O = CTP + L-glutamate + ADP + phosphate + 2 H(+). It catalyses the reaction L-glutamine + H2O = L-glutamate + NH4(+). The catalysed reaction is UTP + NH4(+) + ATP = CTP + ADP + phosphate + 2 H(+). The protein operates within pyrimidine metabolism; CTP biosynthesis via de novo pathway; CTP from UDP: step 2/2. Allosterically activated by GTP, when glutamine is the substrate; GTP has no effect on the reaction when ammonia is the substrate. The allosteric effector GTP functions by stabilizing the protein conformation that binds the tetrahedral intermediate(s) formed during glutamine hydrolysis. Inhibited by the product CTP, via allosteric rather than competitive inhibition. Its function is as follows. Catalyzes the ATP-dependent amination of UTP to CTP with either L-glutamine or ammonia as the source of nitrogen. Regulates intracellular CTP levels through interactions with the four ribonucleotide triphosphates. The protein is CTP synthase of Mycobacterium sp. (strain JLS).